The sequence spans 106 residues: Small ribosomal subunit protein uS10 (106 aa).

The protein belongs to the universal ribosomal protein uS10 family. In terms of assembly, part of the 30S ribosomal subunit.

Functionally, involved in the binding of tRNA to the ribosomes. The protein is Small ribosomal subunit protein uS10 of Prochlorococcus marinus (strain MIT 9312).